The primary structure comprises 346 residues: MTIAVAMSGGTDSLFALVLLKEQGQQVCGLHARFIPPTGHDPVPDIRAMCDRLGVDLHVVDLTEAFEEHVVRPFMEDYMVGRTPNPCARCNATMKFGLLADAAAHVGAVHLATGHYARLLRHPRWGTVLQRGVDPAKDQSYFLSLVPHARLEKAVFPLGNWRKEAVRGELARRSIVPPLPSESQEICFVPDDDYRAFLKNRRVRLPGPGPIVTTRGRKIGSHAGLWQYTEGQRKGLGIAWHEPLYVVGKDMENNMLLVGGREALASPGCVAEEVNLLVPYEDWPAEVAVRIRYRQQPLSARVTLRDGRLYARFREPQPPAARGQVLAVYDMEHHVLGGGVILGPLP.

6–13 (AMSGGTDS) lines the ATP pocket. Cys-90 serves as the catalytic Nucleophile. A disulfide bridge links Cys-90 with Cys-187. Gly-114 is an ATP binding site. The interaction with tRNA stretch occupies residues 137 to 139 (KDQ). The active-site Cysteine persulfide intermediate is Cys-187. Residues 292–293 (RY) form an interaction with tRNA region.

Belongs to the MnmA/TRMU family.

It is found in the cytoplasm. It catalyses the reaction S-sulfanyl-L-cysteinyl-[protein] + uridine(34) in tRNA + AH2 + ATP = 2-thiouridine(34) in tRNA + L-cysteinyl-[protein] + A + AMP + diphosphate + H(+). Catalyzes the 2-thiolation of uridine at the wobble position (U34) of tRNA, leading to the formation of s(2)U34. The sequence is that of tRNA-specific 2-thiouridylase MnmA from Nitratidesulfovibrio vulgaris (strain DP4) (Desulfovibrio vulgaris).